We begin with the raw amino-acid sequence, 113 residues long: Large ribosomal subunit protein uL22 (113 aa).

The protein belongs to the universal ribosomal protein uL22 family. In terms of assembly, part of the 50S ribosomal subunit.

This protein binds specifically to 23S rRNA; its binding is stimulated by other ribosomal proteins, e.g. L4, L17, and L20. It is important during the early stages of 50S assembly. It makes multiple contacts with different domains of the 23S rRNA in the assembled 50S subunit and ribosome. Its function is as follows. The globular domain of the protein is located near the polypeptide exit tunnel on the outside of the subunit, while an extended beta-hairpin is found that lines the wall of the exit tunnel in the center of the 70S ribosome. This Carboxydothermus hydrogenoformans (strain ATCC BAA-161 / DSM 6008 / Z-2901) protein is Large ribosomal subunit protein uL22.